The following is a 171-amino-acid chain: Large ribosomal subunit protein uL10 (171 aa).

The protein belongs to the universal ribosomal protein uL10 family. In terms of assembly, part of the ribosomal stalk of the 50S ribosomal subunit. The N-terminus interacts with L11 and the large rRNA to form the base of the stalk. The C-terminus forms an elongated spine to which L12 dimers bind in a sequential fashion forming a multimeric L10(L12)X complex.

Functionally, forms part of the ribosomal stalk, playing a central role in the interaction of the ribosome with GTP-bound translation factors. This is Large ribosomal subunit protein uL10 (rplJ) from Lactococcus lactis subsp. lactis (strain IL1403) (Streptococcus lactis).